A 1090-amino-acid chain; its full sequence is Vinculin (1090 aa).

Repeat copies occupy residues 339 to 446 (DADN…SQNS) and 455 to 561 (QNAQ…DLGD). Residues 339–561 (DADNVTVMRK…LKNALRDLGD (223 aa)) form a 2 X repeats region. Disordered stretches follow at residues 811 to 842 (GVPM…SQVI) and 864 to 895 (DIPA…EEET). Over residues 817 to 830 (GRHSSYQESISRAS) the composition is skewed to polar residues. The span at 866–887 (PAPPRPPPPVELSPPPRPPPPP) shows a compositional bias: pro residues.

This sequence belongs to the vinculin/alpha-catenin family. In terms of assembly, may interact with sorb-1. As to expression, expressed in gonadal sheath cells and the spermatheca. Expressed in body wall muscles.

Its subcellular location is the cytoplasm. It is found in the cytoskeleton. The protein resides in the cell junction. It localises to the adherens junction. The protein localises to the cell membrane. Its subcellular location is the focal adhesion. Functionally, involved in cell adhesion. May be involved in the attachment of the actin-based microfilaments to the plasma membrane. Involved in ovulation. The chain is Vinculin from Caenorhabditis elegans.